A 609-amino-acid chain; its full sequence is Manganese lipoxygenase (609 aa).

The signal sequence occupies residues 1–16; that stretch reads MRLLLSIAGLTTVVNA. N-linked (GlcNAc...) asparagine glycosylation is found at Asn24, Asn115, Asn156, and Asn193. The 493-residue stretch at 117-609 folds into the Lipoxygenase domain; the sequence is SLKAIQDHGG…PGVIPFYLSV (493 aa). Mn(2+) contacts are provided by His289 and His294. N-linked (GlcNAc...) asparagine glycosylation is present at Asn385. Residues His474 and Asn478 each contribute to the Mn(2+) site. A glycan (N-linked (GlcNAc...) asparagine) is linked at Asn539. Mn(2+) is bound at residue Val609.

The protein belongs to the lipoxygenase family. Manganese lipoxygenase subfamily. It depends on Mn(2+) as a cofactor. Post-translationally, N- and O-glycosylated.

It is found in the secreted. The catalysed reaction is (9Z,12Z)-octadecadienoate + O2 = (9S)-hydroperoxy-(10E,12Z)-octadecadienoate. It catalyses the reaction (9Z,12Z)-octadecadienoate + O2 = (11S)-hydroperoxy-(9Z,12Z)-octadecadienoate. The enzyme catalyses (9Z,12Z)-octadecadienoate + O2 = (13R)-hydroperoxy-(9Z,11E)-octadecadienoate. It carries out the reaction (9Z,12Z,15Z)-octadecatrienoate + O2 = (11R)-hydroperoxy-(9Z,12Z,15Z)-octadecatrienoate. Lipoxygenase that metabolizes linoleic and alpha-linolenic acids to 9-, 11- and 13-hydroperoxy fatty acids. Oxidizes linoleic acid to mainly 9S- and 13R-HPODE and alpha-linolenic acid to 11R-HPOTrE. The protein is Manganese lipoxygenase of Colletotrichum gloeosporioides (strain Cg-14) (Anthracnose fungus).